The primary structure comprises 144 residues: uncharacterized protein (144 aa).

A disordered region spans residues 1–24; it reads MGKVIQFPFGEEPEKKEEKELKTE. Over residues 12-24 the composition is skewed to basic and acidic residues; sequence EPEKKEEKELKTE.

This is an uncharacterized protein from Aquifex aeolicus (strain VF5).